Reading from the N-terminus, the 327-residue chain is MAAPGSCALWSYCGRGWSRAMRGCQLLGLRSSWPGDLLSARLLSQEKRAAETHFGFETVSEEEKGGKVYQVFESVAKKYDVMNDMMSLGIHRVWKDLLLWKMHPLPGTQLLDVAGGTGDIAFRFLNYVQSQHQRKQKRQLRAQQNLSWEEIAKEYQNEEDSLGGSRVVVCDINKEMLKVGKQKALAQGYRAGLAWVLGDAEELPFDDDKFDIYTIAFGIRNVTHIDQALQEAHRVLKPGGRFLCLEFSQVNNPLISRLYDLYSFQVIPVLGEVIAGDWKSYQYLVESIRRFPSQEEFKDMIEDAGFHKVTYESLTSGIVAIHSGFKL.

A mitochondrion-targeting transit peptide spans 1–42; the sequence is MAAPGSCALWSYCGRGWSRAMRGCQLLGLRSSWPGDLLSARL. S-adenosyl-L-methionine is bound by residues threonine 117, aspartate 171, and 199–200; that span reads DA.

Belongs to the class I-like SAM-binding methyltransferase superfamily. MenG/UbiE family. Component of a multi-subunit COQ enzyme complex, composed of at least COQ3, COQ4, COQ5, COQ6, COQ7 and COQ9. Interacts with PYURF; the interaction is direct, stabilizes COQ5 protein and associates PYURF with COQ enzyme complex. In terms of tissue distribution, widely expressed, with highest levels in liver, lung, placenta and skeletal muscle.

It localises to the mitochondrion inner membrane. The catalysed reaction is 2-methoxy-6-(all-trans-decaprenyl)benzene-1,4-diol + S-adenosyl-L-methionine = 5-methoxy-2-methyl-3-(all-trans-decaprenyl)benzene-1,4-diol + S-adenosyl-L-homocysteine + H(+). The protein operates within cofactor biosynthesis; ubiquinone biosynthesis. Functionally, methyltransferase required for the conversion of 2-decaprenyl-6-methoxy-1,4-benzoquinol (DDMQH2) to 2-decaprenyl-3-methyl-6-methoxy-1,4-benzoquinol (DMQH2). The polypeptide is 2-methoxy-6-polyprenyl-1,4-benzoquinol methylase, mitochondrial (Homo sapiens (Human)).